Reading from the N-terminus, the 240-residue chain is Zein-alpha M6 (240 aa).

The first 21 residues, 1 to 21 (MATKIFSLLMLLALSTCVANA), serve as a signal peptide directing secretion.

The protein belongs to the zein family.

Its function is as follows. Zeins are major seed storage proteins. The protein is Zein-alpha M6 of Zea mays (Maize).